We begin with the raw amino-acid sequence, 449 residues long: Glucose-6-phosphate isomerase (449 aa).

The active-site Proton donor is Glu-291. Catalysis depends on residues His-312 and Lys-426.

Belongs to the GPI family.

It is found in the cytoplasm. It carries out the reaction alpha-D-glucose 6-phosphate = beta-D-fructose 6-phosphate. It participates in carbohydrate biosynthesis; gluconeogenesis. The protein operates within carbohydrate degradation; glycolysis; D-glyceraldehyde 3-phosphate and glycerone phosphate from D-glucose: step 2/4. Catalyzes the reversible isomerization of glucose-6-phosphate to fructose-6-phosphate. The sequence is that of Glucose-6-phosphate isomerase from Streptococcus thermophilus (strain CNRZ 1066).